The following is a 344-amino-acid chain: tRNA N6-adenosine threonylcarbamoyltransferase (344 aa).

Fe cation is bound by residues His-119 and His-123. Substrate-binding positions include 141–145 (VVSGG), Asp-174, Gly-187, Asp-191, and Asn-280. Asp-310 serves as a coordination point for Fe cation.

The protein belongs to the KAE1 / TsaD family. Fe(2+) is required as a cofactor.

The protein resides in the cytoplasm. The enzyme catalyses L-threonylcarbamoyladenylate + adenosine(37) in tRNA = N(6)-L-threonylcarbamoyladenosine(37) in tRNA + AMP + H(+). In terms of biological role, required for the formation of a threonylcarbamoyl group on adenosine at position 37 (t(6)A37) in tRNAs that read codons beginning with adenine. Is involved in the transfer of the threonylcarbamoyl moiety of threonylcarbamoyl-AMP (TC-AMP) to the N6 group of A37, together with TsaE and TsaB. TsaD likely plays a direct catalytic role in this reaction. The protein is tRNA N6-adenosine threonylcarbamoyltransferase of Listeria monocytogenes serotype 4b (strain CLIP80459).